The chain runs to 341 residues: Inner membrane ABC transporter permease protein YejE (341 aa).

Topologically, residues 1–21 are cytoplasmic; that stretch reads MSRLSPVNQARWARFRHNRRG. Residues 22-42 form a helical membrane-spanning segment; sequence YWSLWIFLVLFGLSLCSELIA. Topologically, residues 43 to 143 are periplasmic; that stretch reads NDKPLLVRYD…ARILYGTRIS (101 aa). Positions 140–332 constitute an ABC transmembrane type-1 domain; sequence TRISVLFGLM…LLIFIGEAVR (193 aa). Residues 144–164 form a helical membrane-spanning segment; the sequence is VLFGLMLTLCSSVMGVLAGAL. Residues 165-178 are Cytoplasmic-facing; that stretch reads QGYYGGKVDLWGQR. The chain crosses the membrane as a helical span at residues 179-199; it reads FIEVWSGMPTLFLIILLSSVV. Residues 200 to 201 lie on the Periplasmic side of the membrane; that stretch reads QP. Residues 202 to 222 form a helical membrane-spanning segment; that stretch reads NFWWLLAITVLFGWMSLVGVV. The Cytoplasmic segment spans residues 223-252; sequence RAEFLRTRNFDYIRAAQALGVSDRSIILRH. Residues 253–273 traverse the membrane as a helical segment; sequence MLPNAMVATLTFLPFILCSSI. The Periplasmic segment spans residues 274-307; sequence TTLTSLDFLGFGLPLGSPSLGELLLQGKNNLQAP. Residues 308–328 form a helical membrane-spanning segment; sequence WLGITAFLSVAILLSLLIFIG. Topologically, residues 329 to 341 are cytoplasmic; the sequence is EAVRDAFDPNKAV.

Belongs to the binding-protein-dependent transport system permease family. OppBC subfamily.

It localises to the cell inner membrane. Its function is as follows. Probably part of a binding-protein-dependent transport system. Probably responsible for the translocation of the substrate across the membrane. This chain is Inner membrane ABC transporter permease protein YejE (yejE), found in Escherichia coli (strain K12).